A 215-amino-acid polypeptide reads, in one-letter code: Probable peptidyl-prolyl cis-trans isomerase (215 aa).

The 160-residue stretch at 38-197 (DGIYAVMETN…RRGAAAKRFV (160 aa)) folds into the PPIase cyclophilin-type domain.

This sequence belongs to the cyclophilin-type PPIase family.

The catalysed reaction is [protein]-peptidylproline (omega=180) = [protein]-peptidylproline (omega=0). Functionally, PPIases accelerate the folding of proteins. It catalyzes the cis-trans isomerization of proline imidic peptide bonds in oligopeptides. The polypeptide is Probable peptidyl-prolyl cis-trans isomerase (ppiB) (Treponema pallidum (strain Nichols)).